Consider the following 1479-residue polypeptide: Chromosome partition protein MukB (1479 aa).

34–41 (GGNGAGKS) lines the ATP pocket. Coiled coils occupy residues 337-418 (LNLV…QYQQ), 511-604 (QAER…APVW), 780-810 (RAAR…DVQK), 847-1116 (ELDR…AKAG), and 1206-1265 (DDPV…LQAV). The segment at 666 to 783 (PGGSEDPRLN…EVPLFGRAAR (118 aa)) is flexible hinge.

The protein belongs to the SMC family. MukB subfamily. As to quaternary structure, homodimerization via its hinge domain. Binds to DNA via its C-terminal region. Interacts, and probably forms a ternary complex, with MukE and MukF via its C-terminal region. The complex formation is stimulated by calcium or magnesium. Interacts with tubulin-related protein FtsZ.

Its subcellular location is the cytoplasm. It is found in the nucleoid. Functionally, plays a central role in chromosome condensation, segregation and cell cycle progression. Functions as a homodimer, which is essential for chromosome partition. Involved in negative DNA supercoiling in vivo, and by this means organize and compact chromosomes. May achieve or facilitate chromosome segregation by condensation DNA from both sides of a centrally located replisome during cell division. The sequence is that of Chromosome partition protein MukB from Pectobacterium atrosepticum (strain SCRI 1043 / ATCC BAA-672) (Erwinia carotovora subsp. atroseptica).